The sequence spans 447 residues: Replication-associated recombination protein A (447 aa).

Residue G57 to T64 coordinates ATP.

This sequence belongs to the AAA ATPase family. RarA/MGS1/WRNIP1 subfamily.

In terms of biological role, DNA-dependent ATPase that plays important roles in cellular responses to stalled DNA replication processes. This chain is Replication-associated recombination protein A (rarA), found in Escherichia coli O157:H7.